The primary structure comprises 116 residues: T cell receptor alpha variable 14/delta variable 4 (116 aa).

Residues 1–21 (MSLSSLLKVVTASLWLGPGIA) form the signal peptide. The 95-residue stretch at 22 to 116 (QKITQTQPGM…SAMYFCAMRE (95 aa)) folds into the Ig-like domain. Cysteine 43 and cysteine 112 form a disulfide bridge. An N-linked (GlcNAc...) asparagine glycan is attached at asparagine 78.

Alpha-beta TR is a heterodimer composed of an alpha and beta chain; disulfide-linked. The alpha-beta TR is associated with the transmembrane signaling CD3 coreceptor proteins to form the TR-CD3 (TcR or TCR). The assembly of alpha-beta TR heterodimers with CD3 occurs in the endoplasmic reticulum where a single alpha-beta TR heterodimer associates with one CD3D-CD3E heterodimer, one CD3G-CD3E heterodimer and one CD247 homodimer forming a stable octameric structure. CD3D-CD3E and CD3G-CD3E heterodimers preferentially associate with TR alpha and TR beta chains, respectively. The association of the CD247 homodimer is the last step of TcR assembly in the endoplasmic reticulum and is required for transport to the cell surface.

The protein resides in the cell membrane. Functionally, v region of the variable domain of T cell receptor (TR) alpha chain that participates in the antigen recognition. Alpha-beta T cell receptors are antigen specific receptors which are essential to the immune response and are present on the cell surface of T lymphocytes. Recognize peptide-major histocompatibility (MH) (pMH) complexes that are displayed by antigen presenting cells (APC), a prerequisite for efficient T cell adaptive immunity against pathogens. Binding of alpha-beta TR to pMH complex initiates TR-CD3 clustering on the cell surface and intracellular activation of LCK that phosphorylates the ITAM motifs of CD3G, CD3D, CD3E and CD247 enabling the recruitment of ZAP70. In turn ZAP70 phosphorylates LAT, which recruits numerous signaling molecules to form the LAT signalosome. The LAT signalosome propagates signal branching to three major signaling pathways, the calcium, the mitogen-activated protein kinase (MAPK) kinase and the nuclear factor NF-kappa-B (NF-kB) pathways, leading to the mobilization of transcription factors that are critical for gene expression and essential for T cell growth and differentiation. The T cell repertoire is generated in the thymus, by V-(D)-J rearrangement. This repertoire is then shaped by intrathymic selection events to generate a peripheral T cell pool of self-MH restricted, non-autoaggressive T cells. Post-thymic interaction of alpha-beta TR with the pMH complexes shapes TR structural and functional avidity. This Homo sapiens (Human) protein is T cell receptor alpha variable 14/delta variable 4.